The primary structure comprises 181 residues: Malignant T-cell-amplified sequence 1-A (181 aa).

The PUA domain occupies 92–171 (LPHQQVDKGA…IGIENIHYLN (80 aa)).

This sequence belongs to the MCTS1 family.

It is found in the cytoplasm. Its function is as follows. Plays a role as translation enhancer and involved in cell cycle regulation. The sequence is that of Malignant T-cell-amplified sequence 1-A (mcts1-a) from Xenopus laevis (African clawed frog).